The chain runs to 218 residues: Small ribosomal subunit protein uS3c (218 aa).

The 74-residue stretch at 47 to 120 (VRTHIKSSSN…KLHIAIEKVA (74 aa)) folds into the KH type-2 domain.

It belongs to the universal ribosomal protein uS3 family. In terms of assembly, part of the 30S ribosomal subunit.

It localises to the plastid. Its subcellular location is the chloroplast. This is Small ribosomal subunit protein uS3c (rps3) from Picea abies (Norway spruce).